The sequence spans 277 residues: Large ribosomal subunit protein uL2 (277 aa).

A disordered region spans residues 222–277; the sequence is GVTMNPVDHPHGGGEGRTSGGRNPVTPWGFPTKGKKTRNNKATDKFIVSSRHKRKK.

The protein belongs to the universal ribosomal protein uL2 family. As to quaternary structure, part of the 50S ribosomal subunit. Forms a bridge to the 30S subunit in the 70S ribosome.

Its function is as follows. One of the primary rRNA binding proteins. Required for association of the 30S and 50S subunits to form the 70S ribosome, for tRNA binding and peptide bond formation. It has been suggested to have peptidyltransferase activity; this is somewhat controversial. Makes several contacts with the 16S rRNA in the 70S ribosome. This chain is Large ribosomal subunit protein uL2, found in Xanthobacter autotrophicus (strain ATCC BAA-1158 / Py2).